A 186-amino-acid polypeptide reads, in one-letter code: Tegument protein UL55 (186 aa).

It belongs to the alphaherpesvirinae HHV-1 UL55 family.

It is found in the virion tegument. The protein resides in the host nucleus matrix. The polypeptide is Tegument protein UL55 (Homo sapiens (Human)).